A 393-amino-acid chain; its full sequence is Probable chromate transport protein (393 aa).

Helical transmembrane passes span Tyr-22 to His-42, Ala-90 to Ala-110, Trp-119 to Ala-139, Thr-146 to Val-166, Phe-201 to Leu-221, Ala-231 to Val-251, Gln-261 to Gly-281, Phe-282 to Ile-302, Phe-327 to Gly-347, and Leu-370 to Phe-390.

This sequence belongs to the chromate ion transporter (CHR) (TC 2.A.51) family.

The protein localises to the cell membrane. In terms of biological role, may function in the active transport of chromate into the cell under sulfur-deficient conditions. This is Probable chromate transport protein (srpC) from Synechococcus elongatus (strain ATCC 33912 / PCC 7942 / FACHB-805) (Anacystis nidulans R2).